The following is a 129-amino-acid chain: Glycine cleavage system H protein (129 aa).

The Lipoyl-binding domain maps to 24–106; that stretch reads TVVVGVTSYA…YGDGWLIKVR (83 aa). The residue at position 65 (Lys65) is an N6-lipoyllysine.

It belongs to the GcvH family. In terms of assembly, the glycine cleavage system is composed of four proteins: P, T, L and H. The cofactor is (R)-lipoate.

In terms of biological role, the glycine cleavage system catalyzes the degradation of glycine. The H protein shuttles the methylamine group of glycine from the P protein to the T protein. In Gloeobacter violaceus (strain ATCC 29082 / PCC 7421), this protein is Glycine cleavage system H protein.